Here is a 400-residue protein sequence, read N- to C-terminus: Aspartate/prephenate aminotransferase (400 aa).

Positions 39, 125, and 175 each coordinate L-aspartate. K239 is subject to N6-(pyridoxal phosphate)lysine. Residue R375 coordinates L-aspartate.

This sequence belongs to the class-I pyridoxal-phosphate-dependent aminotransferase family. As to quaternary structure, homodimer. Pyridoxal 5'-phosphate serves as cofactor.

Its subcellular location is the cytoplasm. It carries out the reaction L-aspartate + 2-oxoglutarate = oxaloacetate + L-glutamate. The catalysed reaction is L-arogenate + 2-oxoglutarate = prephenate + L-glutamate. Functionally, catalyzes the reversible conversion of aspartate and 2-oxoglutarate to glutamate and oxaloacetate. Can also transaminate prephenate in the presence of glutamate. Required for symbiotic nitrogen fixation. This is Aspartate/prephenate aminotransferase from Rhizobium meliloti (strain 1021) (Ensifer meliloti).